The following is a 417-amino-acid chain: Sterile alpha motif domain-containing protein 14 (417 aa).

Disordered stretches follow at residues 37–299 (LLAK…WQEA) and 388–417 (AAAEKERKAQEKAARQREKLRRREQEAKKS). Residues 40–49 (KGRRHRPSRS) show a composition bias toward basic residues. Ser-84 and Ser-108 each carry phosphoserine. The segment covering 135-153 (AAASCSPPRSAPSSDSSPS) has biased composition (low complexity). The span at 160–173 (RAEPHSEDDSRDAS) shows a compositional bias: basic and acidic residues. 2 positions are modified to phosphoserine: Ser-173 and Ser-179. 2 stretches are compositionally biased toward low complexity: residues 244 to 260 (SGKGSASSGSTTSPTCS) and 276 to 295 (STLSDDSTPPSSSPKIPSGP). Ser-279 bears the Phosphoserine mark. Position 283 is a phosphothreonine (Thr-283). Residues 326 to 389 (WTSQQVGQWL…KRKLKEMAAA (64 aa)) form the SAM domain. Residues 377 to 417 (ALVKRKLKEMAAAAEKERKAQEKAARQREKLRRREQEAKKS) adopt a coiled-coil conformation. A compositionally biased stretch (basic and acidic residues) spans 390-417 (AEKERKAQEKAARQREKLRRREQEAKKS).

The chain is Sterile alpha motif domain-containing protein 14 (SAMD14) from Homo sapiens (Human).